We begin with the raw amino-acid sequence, 112 residues long: Protein lin-52 homolog (112 aa).

Belongs to the lin-52 family. Component of the DREAM complex.

This chain is Protein lin-52 homolog (lin52), found in Danio rerio (Zebrafish).